The primary structure comprises 371 residues: 4-hydroxy-3-methylbut-2-en-1-yl diphosphate synthase (flavodoxin) (371 aa).

Residues Cys-270, Cys-273, Cys-305, and Glu-312 each contribute to the [4Fe-4S] cluster site.

This sequence belongs to the IspG family. [4Fe-4S] cluster serves as cofactor.

It carries out the reaction (2E)-4-hydroxy-3-methylbut-2-enyl diphosphate + oxidized [flavodoxin] + H2O + 2 H(+) = 2-C-methyl-D-erythritol 2,4-cyclic diphosphate + reduced [flavodoxin]. The protein operates within isoprenoid biosynthesis; isopentenyl diphosphate biosynthesis via DXP pathway; isopentenyl diphosphate from 1-deoxy-D-xylulose 5-phosphate: step 5/6. Converts 2C-methyl-D-erythritol 2,4-cyclodiphosphate (ME-2,4cPP) into 1-hydroxy-2-methyl-2-(E)-butenyl 4-diphosphate. In Shewanella sp. (strain ANA-3), this protein is 4-hydroxy-3-methylbut-2-en-1-yl diphosphate synthase (flavodoxin).